We begin with the raw amino-acid sequence, 246 residues long: Orotidine 5'-phosphate decarboxylase (246 aa).

Residues Asp-18, Lys-39, 66–75, Thr-130, Arg-192, Gln-201, Gly-221, and Arg-222 each bind substrate; that span reads DLKFHDIPAT. The Proton donor role is filled by Lys-68.

The protein belongs to the OMP decarboxylase family. Type 1 subfamily. Homodimer.

The enzyme catalyses orotidine 5'-phosphate + H(+) = UMP + CO2. The protein operates within pyrimidine metabolism; UMP biosynthesis via de novo pathway; UMP from orotate: step 2/2. In terms of biological role, catalyzes the decarboxylation of orotidine 5'-monophosphate (OMP) to uridine 5'-monophosphate (UMP). The polypeptide is Orotidine 5'-phosphate decarboxylase (Parasynechococcus marenigrum (strain WH8102)).